The chain runs to 299 residues: Elongation factor Ts (299 aa).

The interval 82–85 is involved in Mg(2+) ion dislocation from EF-Tu; that stretch reads TDFV.

The protein belongs to the EF-Ts family.

It is found in the cytoplasm. Associates with the EF-Tu.GDP complex and induces the exchange of GDP to GTP. It remains bound to the aminoacyl-tRNA.EF-Tu.GTP complex up to the GTP hydrolysis stage on the ribosome. In Dechloromonas aromatica (strain RCB), this protein is Elongation factor Ts.